The chain runs to 173 residues: Crossover junction endodeoxyribonuclease RuvC (173 aa).

Catalysis depends on residues Asp8, Glu67, and Asp139. Mg(2+) contacts are provided by Asp8, Glu67, and Asp139.

The protein belongs to the RuvC family. In terms of assembly, homodimer which binds Holliday junction (HJ) DNA. The HJ becomes 2-fold symmetrical on binding to RuvC with unstacked arms; it has a different conformation from HJ DNA in complex with RuvA. In the full resolvosome a probable DNA-RuvA(4)-RuvB(12)-RuvC(2) complex forms which resolves the HJ. The cofactor is Mg(2+).

Its subcellular location is the cytoplasm. It carries out the reaction Endonucleolytic cleavage at a junction such as a reciprocal single-stranded crossover between two homologous DNA duplexes (Holliday junction).. Its function is as follows. The RuvA-RuvB-RuvC complex processes Holliday junction (HJ) DNA during genetic recombination and DNA repair. Endonuclease that resolves HJ intermediates. Cleaves cruciform DNA by making single-stranded nicks across the HJ at symmetrical positions within the homologous arms, yielding a 5'-phosphate and a 3'-hydroxyl group; requires a central core of homology in the junction. The consensus cleavage sequence is 5'-(A/T)TT(C/G)-3'. Cleavage occurs on the 3'-side of the TT dinucleotide at the point of strand exchange. HJ branch migration catalyzed by RuvA-RuvB allows RuvC to scan DNA until it finds its consensus sequence, where it cleaves and resolves the cruciform DNA. This is Crossover junction endodeoxyribonuclease RuvC from Photorhabdus laumondii subsp. laumondii (strain DSM 15139 / CIP 105565 / TT01) (Photorhabdus luminescens subsp. laumondii).